We begin with the raw amino-acid sequence, 213 residues long: Octanoyltransferase (213 aa).

In terms of domain architecture, BPL/LPL catalytic spans 32–207; that stretch reads ESTLDEIWLV…NILALLNNPD (176 aa). Substrate contacts are provided by residues 71 to 78, 138 to 140, and 151 to 153; these read RGGQVTYH, SLG, and GLA. The Acyl-thioester intermediate role is filled by cysteine 169.

Belongs to the LipB family.

The protein resides in the cytoplasm. It catalyses the reaction octanoyl-[ACP] + L-lysyl-[protein] = N(6)-octanoyl-L-lysyl-[protein] + holo-[ACP] + H(+). Its pathway is protein modification; protein lipoylation via endogenous pathway; protein N(6)-(lipoyl)lysine from octanoyl-[acyl-carrier-protein]: step 1/2. Its function is as follows. Catalyzes the transfer of endogenously produced octanoic acid from octanoyl-acyl-carrier-protein onto the lipoyl domains of lipoate-dependent enzymes. Lipoyl-ACP can also act as a substrate although octanoyl-ACP is likely to be the physiological substrate. This chain is Octanoyltransferase, found in Escherichia coli (strain SMS-3-5 / SECEC).